A 194-amino-acid polypeptide reads, in one-letter code: FMN-dependent NADH:quinone oxidoreductase (194 aa).

Residues Ser9, 15 to 17, and 85 to 88 contribute to the FMN site; these read SIS and MYNF.

This sequence belongs to the azoreductase type 1 family. In terms of assembly, homodimer. The cofactor is FMN.

It carries out the reaction 2 a quinone + NADH + H(+) = 2 a 1,4-benzosemiquinone + NAD(+). It catalyses the reaction N,N-dimethyl-1,4-phenylenediamine + anthranilate + 2 NAD(+) = 2-(4-dimethylaminophenyl)diazenylbenzoate + 2 NADH + 2 H(+). In terms of biological role, quinone reductase that provides resistance to thiol-specific stress caused by electrophilic quinones. Functionally, also exhibits azoreductase activity. Catalyzes the reductive cleavage of the azo bond in aromatic azo compounds to the corresponding amines. In Xanthomonas oryzae pv. oryzae (strain MAFF 311018), this protein is FMN-dependent NADH:quinone oxidoreductase.